A 207-amino-acid polypeptide reads, in one-letter code: High frequency lysogenization protein HflD homolog (207 aa).

It belongs to the HflD family.

The protein resides in the cytoplasm. Its subcellular location is the cell inner membrane. The chain is High frequency lysogenization protein HflD homolog from Tolumonas auensis (strain DSM 9187 / NBRC 110442 / TA 4).